Here is a 145-residue protein sequence, read N- to C-terminus: Protein SprT-like (145 aa).

The 137-residue stretch at 4-140 (TNYVQEVSLA…VCGNCHGKLM (137 aa)) folds into the SprT-like domain. Residue histidine 64 participates in Zn(2+) binding. Glutamate 65 is a catalytic residue. Histidine 68 is a Zn(2+) binding site.

The protein belongs to the SprT family. Zn(2+) is required as a cofactor.

Its subcellular location is the cytoplasm. The chain is Protein SprT-like from Streptococcus pyogenes serotype M3 (strain SSI-1).